The primary structure comprises 525 residues: GMP synthase [glutamine-hydrolyzing] (525 aa).

One can recognise a Glutamine amidotransferase type-1 domain in the interval 9 to 207 (RILILDFGSQ…VLDICRCTPL (199 aa)). Cysteine 86 serves as the catalytic Nucleophile. Residues histidine 181 and glutamate 183 contribute to the active site. The GMPS ATP-PPase domain maps to 208–400 (WTPAKIIEDA…LGLPYDMLYR (193 aa)). Residue 235–241 (SGGVDSS) participates in ATP binding.

In terms of assembly, homodimer.

It catalyses the reaction XMP + L-glutamine + ATP + H2O = GMP + L-glutamate + AMP + diphosphate + 2 H(+). It participates in purine metabolism; GMP biosynthesis; GMP from XMP (L-Gln route): step 1/1. Functionally, catalyzes the synthesis of GMP from XMP. This is GMP synthase [glutamine-hydrolyzing] from Sodalis glossinidius (strain morsitans).